We begin with the raw amino-acid sequence, 543 residues long: Coiled-coil domain-containing protein 9 (543 aa).

2 stretches are compositionally biased toward basic and acidic residues: residues 38-47 (IEEDRKKAEL) and 59-72 (RSME…EEKS). Residues 38 to 543 (IEEDRKKAEL…SGEAWPFANA (506 aa)) are disordered. Residue Thr-94 is modified to Phosphothreonine. 4 positions are modified to omega-N-methylarginine: Arg-106, Arg-120, Arg-126, and Arg-128. Asymmetric dimethylarginine is present on residues Arg-129, Arg-131, and Arg-133. Phosphoserine is present on Ser-135. Composition is skewed to basic and acidic residues over residues 146 to 183 (TSDR…REGV), 192 to 212 (FLDD…DRRE), and 225 to 239 (DFER…ERQG). The stretch at 147–183 (SDRKSKEWEERRRQNIEKMNEEMEKIAEYERNQREGV) forms a coiled coil. Residues Ser-246 and Ser-253 each carry the phosphoserine modification. Basic and acidic residues-rich tracts occupy residues 256 to 277 (GRER…QERL), 287 to 300 (WRRE…DGMF), 309 to 318 (ELSHRYDDQA), and 359 to 372 (YSDH…REEA). Phosphoserine occurs at positions 374 and 384. Residues 376–394 (APESSQSISLEETPTQASE) show a composition bias toward polar residues. A compositionally biased stretch (acidic residues) spans 405–453 (EDGEEDVGEEEEGEEEGEDEEDEEWEDVSEDVTEEEEEEEEEFEEDEEG). Positions 422–452 (EDEEDEEWEDVSEDVTEEEEEEEEEFEEDEE) form a coiled coil. The residue at position 533 (Ser-533) is a Phosphoserine.

Probable component of the exon junction complex (EJC); the association is RNA-dependent.

Its function is as follows. Probable component of the exon junction complex (EJC), a multiprotein complex that associates immediately upstream of the exon-exon junction on mRNAs and serves as a positional landmark for the intron exon structure of genes and directs post-transcriptional processes in the cytoplasm such as mRNA export, nonsense-mediated mRNA decay (NMD) or translation. In Mus musculus (Mouse), this protein is Coiled-coil domain-containing protein 9 (Ccdc9).